We begin with the raw amino-acid sequence, 365 residues long: Serine/threonine-protein phosphatase 2A activator 1 (365 aa).

The disordered stretch occupies residues tyrosine 321–threonine 349. Residues proline 331–threonine 342 show a composition bias toward low complexity.

It belongs to the PTPA-type PPIase family.

The protein localises to the cytoplasm. It is found in the nucleus. It catalyses the reaction [protein]-peptidylproline (omega=180) = [protein]-peptidylproline (omega=0). PPIases accelerate the folding of proteins. It catalyzes the cis-trans isomerization of proline imidic peptide bonds in oligopeptides. Acts as a regulatory subunit for PP2A-like phosphatases modulating their activity or substrate specificity, probably by inducing a conformational change in the catalytic subunit, a direct target of the PPIase. Can reactivate inactive phosphatase PP2A-phosphatase methylesterase complexes (PP2Ai) in presence of ATP and Mg(2+) by dissociating the inactive form from the complex. The polypeptide is Serine/threonine-protein phosphatase 2A activator 1 (RRD1) (Eremothecium gossypii (strain ATCC 10895 / CBS 109.51 / FGSC 9923 / NRRL Y-1056) (Yeast)).